The sequence spans 353 residues: Guanine nucleotide-binding protein subunit beta-5 (353 aa).

WD repeat units follow at residues 61 to 100 (GHGN…KEHA), 103 to 142 (MPCT…NENM), 151 to 192 (MHTN…QSFH), 194 to 236 (HGAD…QAFE), 237 to 276 (THES…EVAI), 278 to 320 (SKES…RVSI), and 323 to 352 (GHEN…LRVW).

Belongs to the WD repeat G protein beta family. Component of a complex composed of RGS9 (isoform RGS9-1), GNB5 and RGS9BP; within this complex, the presence of GNB5 stabilizes both itself and RGS9 and increases RGS9 GTPase-activating protein (GAP) activity. Interacts with RGS7, forming the RGS7-GNB5 complex; within this complex, the presence of GNB5 increases RGS7 GTPase-activating protein (GAP) activity. Interacts with GPR158; promotes the GTPase activator activity of the RGS7-GNB5 complex in absence of glycine, in contrast GTPase activator activity of the RGS7-GNB5 complex is inhibited in presence of glycine. Interacts with RGS6.

It localises to the membrane. Its function is as follows. Enhances GTPase-activating protein (GAP) activity of regulator of G protein signaling (RGS) proteins, such as RGS7 and RGS9, hence involved in the termination of the signaling initiated by the G protein coupled receptors (GPCRs) by accelerating the GTP hydrolysis on the G-alpha subunits, thereby promoting their inactivation. Increases RGS7 GTPase-activating protein (GAP) activity, thereby regulating mood and cognition. Increases RGS9 GTPase-activating protein (GAP) activity, hence contributes to the deactivation of G protein signaling initiated by D(2) dopamine receptors. May play an important role in neuronal signaling, including in the parasympathetic, but not sympathetic, control of heart rate. The chain is Guanine nucleotide-binding protein subunit beta-5 (GNB5) from Oryctolagus cuniculus (Rabbit).